A 617-amino-acid polypeptide reads, in one-letter code: Elongation factor 4 (617 aa).

The 182-residue stretch at 17 to 198 (AIIRNFCIIA…KIVRDLPAPV (182 aa)) folds into the tr-type G domain. GTP is bound by residues 29–34 (DHGKST) and 145–148 (NKID).

This sequence belongs to the TRAFAC class translation factor GTPase superfamily. Classic translation factor GTPase family. LepA subfamily.

The protein localises to the cell membrane. The catalysed reaction is GTP + H2O = GDP + phosphate + H(+). Functionally, required for accurate and efficient protein synthesis under certain stress conditions. May act as a fidelity factor of the translation reaction, by catalyzing a one-codon backward translocation of tRNAs on improperly translocated ribosomes. Back-translocation proceeds from a post-translocation (POST) complex to a pre-translocation (PRE) complex, thus giving elongation factor G a second chance to translocate the tRNAs correctly. Binds to ribosomes in a GTP-dependent manner. The sequence is that of Elongation factor 4 from Paenarthrobacter aurescens (strain TC1).